The sequence spans 215 residues: UPF0173 metal-dependent hydrolase NEQ378 (215 aa).

The protein belongs to the UPF0173 family.

In Nanoarchaeum equitans (strain Kin4-M), this protein is UPF0173 metal-dependent hydrolase NEQ378.